A 54-amino-acid chain; its full sequence is Ovomucoid (54 aa).

The Kazal-like domain occupies 4–54 (VDCSDYPKPVCSPENMPVCGSDSKTYSNKCDFCNAVADSNGTLTLSHFGKC). Disulfide bonds link cysteine 6–cysteine 36, cysteine 14–cysteine 33, and cysteine 22–cysteine 54. N-linked (GlcNAc...) asparagine glycosylation occurs at asparagine 43.

It localises to the secreted. The protein is Ovomucoid of Nycticorax nycticorax (Black-crowned night-heron).